Here is a 185-residue protein sequence, read N- to C-terminus: Protein GrpE (185 aa).

The interval 1–37 (MEEQEEKQYNQNIQDNEEGTQMREELQESTSAQQTLQ) is disordered. Positions 28–37 (ESTSAQQTLQ) are enriched in polar residues.

This sequence belongs to the GrpE family. Homodimer.

It localises to the cytoplasm. Its function is as follows. Participates actively in the response to hyperosmotic and heat shock by preventing the aggregation of stress-denatured proteins, in association with DnaK and GrpE. It is the nucleotide exchange factor for DnaK and may function as a thermosensor. Unfolded proteins bind initially to DnaJ; upon interaction with the DnaJ-bound protein, DnaK hydrolyzes its bound ATP, resulting in the formation of a stable complex. GrpE releases ADP from DnaK; ATP binding to DnaK triggers the release of the substrate protein, thus completing the reaction cycle. Several rounds of ATP-dependent interactions between DnaJ, DnaK and GrpE are required for fully efficient folding. In Helicobacter hepaticus (strain ATCC 51449 / 3B1), this protein is Protein GrpE.